The sequence spans 171 residues: Shikimate kinase (171 aa).

Position 14–19 (14–19) interacts with ATP; sequence GAGKST. Serine 18 is a binding site for Mg(2+). The substrate site is built by aspartate 36, arginine 60, and glycine 82. Arginine 120 is an ATP binding site. Arginine 139 contacts substrate. Glutamine 156 contacts ATP.

Belongs to the shikimate kinase family. In terms of assembly, monomer. Requires Mg(2+) as cofactor.

The protein resides in the cytoplasm. The catalysed reaction is shikimate + ATP = 3-phosphoshikimate + ADP + H(+). The protein operates within metabolic intermediate biosynthesis; chorismate biosynthesis; chorismate from D-erythrose 4-phosphate and phosphoenolpyruvate: step 5/7. In terms of biological role, catalyzes the specific phosphorylation of the 3-hydroxyl group of shikimic acid using ATP as a cosubstrate. This Shewanella sp. (strain ANA-3) protein is Shikimate kinase.